Consider the following 385-residue polypeptide: Na(+)/H(+) antiporter NhaA (385 aa).

11 helical membrane-spanning segments follow: residues 9 to 29 (YSAI…NVLD), 45 to 65 (IFGL…VFFF), 87 to 107 (IIPG…YLSV), 114 to 134 (GWPV…AIFG), 155 to 175 (AGIV…WIIV), 198 to 218 (TFLI…SVYQ), 220 to 235 (GIHA…IMLN), 245 to 265 (ALEP…AAMV), 282 to 302 (ILLG…IIAL), 312 to 332 (FFNL…SLLM), and 345 to 365 (QGVI…IILM).

Belongs to the NhaA Na(+)/H(+) (TC 2.A.33) antiporter family.

The protein resides in the cell membrane. The enzyme catalyses Na(+)(in) + 2 H(+)(out) = Na(+)(out) + 2 H(+)(in). Functionally, na(+)/H(+) antiporter that extrudes sodium in exchange for external protons. The polypeptide is Na(+)/H(+) antiporter NhaA (Tropheryma whipplei (strain TW08/27) (Whipple's bacillus)).